We begin with the raw amino-acid sequence, 49 residues long: uncharacterized protein (49 aa).

The N-terminal stretch at methionine 1–serine 22 is a signal peptide.

Its subcellular location is the secreted. This is an uncharacterized protein from Dictyostelium discoideum (Social amoeba).